The following is a 362-amino-acid chain: 3-dehydroquinate synthase (362 aa).

NAD(+) contacts are provided by residues 72–77 (DGEQYK), 106–110 (GVVGD), 130–131 (TT), K143, K152, and 170–173 (CLKT). Residues E185, H248, and H265 each coordinate Zn(2+).

It belongs to the sugar phosphate cyclases superfamily. Dehydroquinate synthase family. It depends on Co(2+) as a cofactor. The cofactor is Zn(2+). Requires NAD(+) as cofactor.

The protein resides in the cytoplasm. The enzyme catalyses 7-phospho-2-dehydro-3-deoxy-D-arabino-heptonate = 3-dehydroquinate + phosphate. The protein operates within metabolic intermediate biosynthesis; chorismate biosynthesis; chorismate from D-erythrose 4-phosphate and phosphoenolpyruvate: step 2/7. Its function is as follows. Catalyzes the conversion of 3-deoxy-D-arabino-heptulosonate 7-phosphate (DAHP) to dehydroquinate (DHQ). This chain is 3-dehydroquinate synthase, found in Aliivibrio fischeri (strain ATCC 700601 / ES114) (Vibrio fischeri).